Consider the following 445-residue polypeptide: Putative ubiquitin carboxyl-terminal hydrolase L293 (445 aa).

Positions 133 to 441 constitute a USP domain; sequence KALANFGNSC…SAYIILYGDI (309 aa). The Nucleophile role is filled by Cys142. His384 (proton acceptor) is an active-site residue.

This sequence belongs to the peptidase C19 family.

It is found in the virion. The enzyme catalyses Thiol-dependent hydrolysis of ester, thioester, amide, peptide and isopeptide bonds formed by the C-terminal Gly of ubiquitin (a 76-residue protein attached to proteins as an intracellular targeting signal).. The polypeptide is Putative ubiquitin carboxyl-terminal hydrolase L293 (Acanthamoeba polyphaga mimivirus (APMV)).